Here is a 172-residue protein sequence, read N- to C-terminus: Large ribosomal subunit protein bL21m (172 aa).

The N-terminal 20 residues, 1–20 (MIRNIGSNLMKSSSSILLRN), are a transit peptide targeting the mitochondrion.

It belongs to the bacterial ribosomal protein bL21 family.

It localises to the mitochondrion. This chain is Large ribosomal subunit protein bL21m (mrpl21), found in Dictyostelium discoideum (Social amoeba).